The primary structure comprises 115 residues: NADH-ubiquinone oxidoreductase chain 3 (115 aa).

The next 3 helical transmembrane spans lie at 4-24 (LMILSVNIILSTCLIMIAFWL), 55-75 (FFLVAITFLLFDLEIALLLPL), and 84-104 (INMMMSTAFILVSILALGLAY).

This sequence belongs to the complex I subunit 3 family. In terms of assembly, core subunit of respiratory chain NADH dehydrogenase (Complex I) which is composed of 45 different subunits. Interacts with TMEM186. Interacts with TMEM242.

It is found in the mitochondrion inner membrane. The enzyme catalyses a ubiquinone + NADH + 5 H(+)(in) = a ubiquinol + NAD(+) + 4 H(+)(out). Core subunit of the mitochondrial membrane respiratory chain NADH dehydrogenase (Complex I) which catalyzes electron transfer from NADH through the respiratory chain, using ubiquinone as an electron acceptor. Essential for the catalytic activity of complex I. The polypeptide is NADH-ubiquinone oxidoreductase chain 3 (Podomys floridanus (Florida mouse)).